A 274-amino-acid chain; its full sequence is Penicillin-insensitive murein endopeptidase (274 aa).

The signal sequence occupies residues 1–19; the sequence is MNKTAIALLALLASSASLA. 3 disulfide bridges follow: Cys44–Cys265, Cys187–Cys235, and Cys216–Cys223. Zn(2+) contacts are provided by His110, His113, Asp120, Asp147, His150, and His211. Residues 227-274 form a disordered region; sequence PLPPPGDGCGAELQSWFEPPKPGTTKPEKKTPPPLPPSCQALLDEHVI.

It belongs to the peptidase M74 family. Dimer. The cofactor is Zn(2+).

Its subcellular location is the periplasm. Murein endopeptidase that cleaves the D-alanyl-meso-2,6-diamino-pimelyl amide bond that connects peptidoglycan strands. Likely plays a role in the removal of murein from the sacculus. The chain is Penicillin-insensitive murein endopeptidase from Escherichia coli (strain SE11).